We begin with the raw amino-acid sequence, 713 residues long: Fibroblast growth factor receptor 4 (713 aa).

The N-terminal stretch at Met-1–Ser-20 is a signal peptide. The tract at residues His-21–Tyr-54 is disordered. Topologically, residues His-21 to Asp-281 are extracellular. Residues Asp-42–Tyr-54 are compositionally biased toward basic and acidic residues. Ig-like C2-type domains lie at Pro-59 to Asp-152 and Pro-161 to Thr-261. A disulfide bridge links Cys-84 with Cys-136. 5 N-linked (GlcNAc...) asparagine glycosylation sites follow: Asn-133, Asn-170, Asn-202, Asn-223, and Asn-234. Residues Cys-183 and Cys-245 are joined by a disulfide bond. The chain crosses the membrane as a helical span at residues Ile-282–Cys-302. Topologically, residues Arg-303 to Thr-713 are cytoplasmic. Residues Leu-379–Leu-667 form the Protein kinase domain. ATP-binding positions include Leu-385 to Val-393 and Lys-415. Catalysis depends on Asp-524, which acts as the Proton acceptor. 3 positions are modified to phosphotyrosine; by autocatalysis: Tyr-554, Tyr-555, and Tyr-666.

It belongs to the protein kinase superfamily. Tyr protein kinase family. Fibroblast growth factor receptor subfamily. As to quaternary structure, monomer. Homodimer after ligand binding. Interacts with FGF1, FGF2, FGF4, FGF6, FGF8, FGF9, FGF16, FGF17, FGF18, FGF19, FGF21 and FGF23 (in vitro). Binding affinity for FGF family members is enhanced by interactions between FGFs and heparan sulfate proteoglycans. Interacts with KLB; this strongly increases the affinity for FGF19 and FGF23. Affinity for FGF19 is strongly increased by KLB and sulfated glycosaminoglycans. KLB and KL both interact with the core-glycosylated FGFR4 in the endoplasmic reticulum and promote its degradation, so that only FGFR4 with fully mature N-glycans is expressed at the cell surface. Identified in a complex with NCAM1, CDH2, PLCG1, FRS2, SRC, SHC1, GAP43 and CTTN. Interacts with MMP14 and HIP1. Interacts with STAT3. Post-translationally, N-glycosylated. Full maturation of the glycan chains in the Golgi is essential for high affinity interaction with FGF19. In terms of processing, ubiquitinated. Subject to proteasomal degradation when not fully glycosylated. Autophosphorylated. Binding of FGF family members together with heparan sulfate proteoglycan or heparin promotes receptor dimerization and autophosphorylation on tyrosine residues. Autophosphorylation occurs in trans between the two FGFR molecules present in the dimer.

Its subcellular location is the cell membrane. It localises to the endosome. It is found in the endoplasmic reticulum. It carries out the reaction L-tyrosyl-[protein] + ATP = O-phospho-L-tyrosyl-[protein] + ADP + H(+). Its activity is regulated as follows. Present in an inactive conformation in the absence of bound ligand. Ligand binding leads to dimerization and activation by autophosphorylation on tyrosine residues. In terms of biological role, tyrosine-protein kinase that acts as a cell-surface receptor for fibroblast growth factors and plays a role in the regulation of cell proliferation, differentiation and migration, and in regulation of lipid metabolism, bile acid biosynthesis, glucose uptake, vitamin D metabolism and phosphate homeostasis. Required for normal down-regulation of the expression of CYP7A1, the rate-limiting enzyme in bile acid synthesis, in response to FGF19. Phosphorylates PLCG1 and FRS2. Ligand binding leads to the activation of several signaling cascades. Activation of PLCG1 leads to the production of the cellular signaling molecules diacylglycerol and inositol 1,4,5-trisphosphate. Phosphorylation of FRS2 triggers recruitment of GRB2, GAB1, PIK3R1 and SOS1, and mediates activation of RAS, MAPK1/ERK2, MAPK3/ERK1 and the MAP kinase signaling pathway, as well as of the AKT1 signaling pathway. Promotes SRC-dependent phosphorylation of the matrix protease MMP14 and its lysosomal degradation. FGFR4 signaling is down-regulated by receptor internalization and degradation; MMP14 promotes internalization and degradation of FGFR4. The protein is Fibroblast growth factor receptor 4 (FGFR4) of Coturnix coturnix (Common quail).